The primary structure comprises 1072 residues: E3 ubiquitin-protein ligase RNF31 (1072 aa).

Positions 1–485 (MPGEEEERAF…PEKQRQDKMR (485 aa)) are polyubiquitin-binding. Residues 71–142 (TLSTALNILE…SFPEGQEEPD (72 aa)) enclose the PUB domain. The disordered stretch occupies residues 263–290 (QGTHLSPSLPASAQPRPQSTSLLALGDS). Over residues 265-280 (THLSPSLPASAQPRPQ) the composition is skewed to polar residues. Residues 281–290 (STSLLALGDS) are compositionally biased toward low complexity. 2 RanBP2-type zinc fingers span residues 299 to 329 (SAHL…PRGC) and 350 to 379 (ARGR…PRLA). Serine 383 carries the post-translational modification Phosphoserine. The RanBP2-type 3 zinc finger occupies 409 to 438 (QSQVWYCIHCTFCNSSPGWVCVMCNRTSSP). Residues 443-484 (HAPRPYASSLEKGPPKPGPPRRLSAPLPSSCGDPEKQRQDKM) are disordered. Positions 463–472 (RRLSAPLPSS) are enriched in low complexity. Residue serine 466 is modified to Phosphoserine. Positions 475-484 (DPEKQRQDKM) are enriched in basic and acidic residues. Positions 563–616 (GNLDEAVEECVRTRRRKVQELQSLGFGPEEGSLQALFQHGGDVSRALTELQRQR) are interaction with RBCK1. The UBA domain maps to 564-615 (NLDEAVEECVRTRRRKVQELQSLGFGPEEGSLQALFQHGGDVSRALTELQRQ). The interval 695-929 (LAQECAVCGW…KSLHGHHPRD (235 aa)) is TRIAD supradomain. Positions 699, 702, 717, 719, 722, and 725 each coordinate Zn(2+). The RING-type 1 zinc-finger motif lies at 699–749 (CAVCGWALPHNRMQALTSCECTICPDCFRQHFTIALKEKHITDMVCPACGR). Lysine 735 participates in a covalent cross-link: (Microbial infection) Glycyl lysine isopeptide (Lys-Gly) (interchain with G-Cter in ubiquitin). Zn(2+) is bound by residues cysteine 744 and cysteine 747. An IBR-type zinc finger spans residues 779–841 (ALFHKKLTEG…WEEQHRGRSC (63 aa)). A (Microbial infection) Glycyl lysine isopeptide (Lys-Gly) (interchain with G-Cter in ubiquitin) cross-link involves residue lysine 783. Zn(2+) is bound by residues cysteine 799, cysteine 802, cysteine 817, cysteine 820, cysteine 825, cysteine 828, histidine 836, cysteine 841, cysteine 871, and cysteine 874. The RING-type 2; atypical zinc finger occupies 871–901 (CPKCKFSYALARGGCMHFHCTQCRHQFCSGC). Lysine 875 is covalently cross-linked ((Microbial infection) Glycyl lysine isopeptide (Lys-Gly) (interchain with G-Cter in ubiquitin)). Cysteine 885 is an active-site residue. Cysteine 890, cysteine 893, cysteine 898, cysteine 901, cysteine 916, and histidine 925 together coordinate Zn(2+). Residues 910–1072 (KCPEPNCRVK…LGQSIPRRRK (163 aa)) form an LDD domain region.

This sequence belongs to the RBR family. Component of the LUBAC complex (linear ubiquitin chain assembly complex) which consists of SHARPIN, RBCK1 and RNF31. LUBAC has a MW of approximately 600 kDa suggesting a heteromultimeric assembly of its subunits. Associates with the TNF-R1 signaling complex (TNF-RSC) in a stimulation-dependent manner. Interacts (via the PUB domain) with OTULIN (via the PIM motif); the interaction is direct. Interacts (via the PUB domain) with VCP (via the PIM motif). Interacts (via the PUB domain) with SPATA2 (via the PIM motif); interaction is direct and bridges RNF31 and CYLD. Interacts with CYLD; the interaction is indirect and is mediated via SPATA2. Interacts with MUSK. Interacts with CARD11, promoting linear ubiquitination of BCL10. As to quaternary structure, (Microbial infection) Interacts with S.flexneri E3 ubiquitin-protein ligases IpaH1.4 and IpaH2.5, leading to its ubiquitination. Autoubiquitinated. Interaction with OTULIN is required to suppress formation of 'Met-1'-linked polyubiquitin chains and prevent subsequent inactivation of the LUBAC complex. In terms of processing, cleaved by caspase during apoptosis. Post-translationally, (Microbial infection) Ubiquitinated by S.flexneri E3 ubiquitin-protein ligases IpaH1.4 and IpaH2.5, leading to its degradation by the proteasome, thereby preventing formation of the bacterial ubiquitin coat and activation of innate immunity. As to expression, expressed in both normal and transformed breast epithelial cell lines.

The protein resides in the cytoplasm. The enzyme catalyses [E2 ubiquitin-conjugating enzyme]-S-ubiquitinyl-L-cysteine + [acceptor protein]-L-lysine = [E2 ubiquitin-conjugating enzyme]-L-cysteine + [acceptor protein]-N(6)-ubiquitinyl-L-lysine.. Its pathway is protein modification; protein ubiquitination. Functionally, E3 ubiquitin-protein ligase component of the LUBAC complex which conjugates linear ('Met-1'-linked) polyubiquitin chains to substrates and plays a key role in NF-kappa-B activation and regulation of inflammation. LUBAC conjugates linear polyubiquitin to IKBKG and RIPK1 and is involved in activation of the canonical NF-kappa-B and the JNK signaling pathways. Linear ubiquitination mediated by the LUBAC complex interferes with TNF-induced cell death and thereby prevents inflammation. LUBAC is recruited to the TNF-R1 signaling complex (TNF-RSC) following polyubiquitination of TNF-RSC components by BIRC2 and/or BIRC3 and to conjugate linear polyubiquitin to IKBKG and possibly other components contributing to the stability of the complex. The LUBAC complex is also involved in innate immunity by conjugating linear polyubiquitin chains at the surface of bacteria invading the cytosol to form the ubiquitin coat surrounding bacteria. LUBAC is not able to initiate formation of the bacterial ubiquitin coat, and can only promote formation of linear polyubiquitins on pre-existing ubiquitin. Recruited to the surface of bacteria by RNF213, which initiates the bacterial ubiquitin coat. The bacterial ubiquitin coat acts as an 'eat-me' signal for xenophagy and promotes NF-kappa-B activation. Together with OTULIN, the LUBAC complex regulates the canonical Wnt signaling during angiogenesis. RNF31 is required for linear ubiquitination of BCL10, thereby promoting TCR-induced NF-kappa-B activation. Binds polyubiquitin of different linkage types. In Homo sapiens (Human), this protein is E3 ubiquitin-protein ligase RNF31.